We begin with the raw amino-acid sequence, 201 residues long: Holliday junction branch migration complex subunit RuvA (201 aa).

The tract at residues 1–63 is domain I; that stretch reads MIAFVSGTVA…EDSLTLYGFA (63 aa). The interval 64–139 is domain II; the sequence is DDDERQVFEL…RLGEPIGAPA (76 aa). Residues 139–143 are flexible linker; it reads AVGAP. Positions 144–201 are domain III; sequence VSTGWRDQLHAALIGLGYATREADEAVSAVAPQAEAAGGTPQVGALLKAALQTLNRAR.

The protein belongs to the RuvA family. Homotetramer. Forms an RuvA(8)-RuvB(12)-Holliday junction (HJ) complex. HJ DNA is sandwiched between 2 RuvA tetramers; dsDNA enters through RuvA and exits via RuvB. An RuvB hexamer assembles on each DNA strand where it exits the tetramer. Each RuvB hexamer is contacted by two RuvA subunits (via domain III) on 2 adjacent RuvB subunits; this complex drives branch migration. In the full resolvosome a probable DNA-RuvA(4)-RuvB(12)-RuvC(2) complex forms which resolves the HJ.

It localises to the cytoplasm. Its function is as follows. The RuvA-RuvB-RuvC complex processes Holliday junction (HJ) DNA during genetic recombination and DNA repair, while the RuvA-RuvB complex plays an important role in the rescue of blocked DNA replication forks via replication fork reversal (RFR). RuvA specifically binds to HJ cruciform DNA, conferring on it an open structure. The RuvB hexamer acts as an ATP-dependent pump, pulling dsDNA into and through the RuvAB complex. HJ branch migration allows RuvC to scan DNA until it finds its consensus sequence, where it cleaves and resolves the cruciform DNA. This chain is Holliday junction branch migration complex subunit RuvA, found in Streptomyces coelicolor (strain ATCC BAA-471 / A3(2) / M145).